Consider the following 318-residue polypeptide: 26 kDa endochitinase 1 (318 aa).

The first 19 residues, 1–19, serve as a signal peptide directing secretion; the sequence is MRAFVLFAVVAMAATMAVA. The Chitin-binding type-1 domain maps to 20-59; that stretch reads EQCGSQAGGATCPNCLCCSRFGWCGSTPYCGDGCQSQCSG. 7 cysteine pairs are disulfide-bonded: cysteine 22-cysteine 37, cysteine 31-cysteine 43, cysteine 36-cysteine 49, cysteine 53-cysteine 57, cysteine 98-cysteine 160, cysteine 172-cysteine 180, and cysteine 279-cysteine 311. Glutamate 142 functions as the Proton donor in the catalytic mechanism.

Belongs to the glycosyl hydrolase 19 family. Chitinase class I subfamily.

The enzyme catalyses Random endo-hydrolysis of N-acetyl-beta-D-glucosaminide (1-&gt;4)-beta-linkages in chitin and chitodextrins.. Functionally, defense against chitin-containing fungal pathogens. The chain is 26 kDa endochitinase 1 from Hordeum vulgare (Barley).